A 975-amino-acid chain; its full sequence is 26S proteasome non-ATPase regulatory subunit 1 (975 aa).

Residues 272–303 (EKKSTTTTTTTPASDSMEIDIDSGNEKSGGSS) form a disordered region. 10 PC repeats span residues 393 to 426 (SAIS…NQTP), 431 to 464 (GSLY…ILHH), 465 to 499 (GASL…VSGE), 500 to 534 (AAGL…EKTI), 536 to 569 (SLSM…LIRY), 570 to 605 (GGMY…SVRR), 606 to 638 (AAVT…PHVR), 640 to 674 (GAAF…YVKQ), 675 to 715 (AAWI…DSMS), and 718 to 748 (GAVL…NMNA). 2 disordered regions span residues 832 to 882 (SSRS…KSNP) and 922 to 975 (PEQL…EFTE). Basic and acidic residues-rich tracts occupy residues 842–880 (DVEK…ERKS) and 926–935 (VVKEKPETKQ). Residues 944–961 (TATATASLPNATTTTSPT) are compositionally biased toward low complexity.

It belongs to the proteasome subunit S1 family.

Acts as a regulatory subunit of the 26 proteasome which is involved in the ATP-dependent degradation of ubiquitinated proteins. In Dictyostelium discoideum (Social amoeba), this protein is 26S proteasome non-ATPase regulatory subunit 1 (psmD1).